Consider the following 638-residue polypeptide: MTHPPKTPLLDQVIYPADLRKLEDRDLPQLAREVRDEMIDAVSRTGGHLGAGLGVVELTIAIHSVFDTPDDRLIFDVGHQCYPHKILTGRRDRIRTLRQENGLSGFTRRAESEYDPFGAAHSSTSISAGLGMAIAADLDKNDRRVIAVIGDGAMSAGMAYEALNNAGALDARLIVILNDNDMSIAPPTGAMSAYLARLASGRTYMGFRDFGKKLTAYLGKNIDRAITRAVEHARGYVTGGTMFEEMGFYHIGPIDGHSFDHLLPVLRNVRDNARGPVLIHVVTQKGKGYPPAEAAADKYHGVNKFDVITGAQARVKPNAPSYTSVFAEALVQEAALDDKIVGITAAMPNGTGLDKLAEAFPSRCFDVGIAEQHAVTFAAGLAAEGYKPFAALYSTFLQRAYDQVVHDVAIQGLPVRFPIDRAGFVGADGPTHAGSFDTAFLATLPGFVVMAAADEAELKHMVRTAVAYDAGPISFRYPRGEGVGVDMPARGEILQIGKGRIVKEGTKVALLSFGTRLADCLLAAEDLEAAGLSTTVADARFAKPLDHDLIRQLARHHEMLITVEEGSVGGFGSQVMQYLSSEGLLDNGLKIRSLVMPDIWMEQAKPEAMNAHAGLDRAGIVSTVFRALGRGVAVGVAG.

Residues H79 and 120–122 (AHS) contribute to the thiamine diphosphate site. Residue D151 participates in Mg(2+) binding. Residues 152–153 (GA), N180, Y289, and E371 contribute to the thiamine diphosphate site. N180 lines the Mg(2+) pocket.

This sequence belongs to the transketolase family. DXPS subfamily. Homodimer. Mg(2+) is required as a cofactor. Requires thiamine diphosphate as cofactor.

The catalysed reaction is D-glyceraldehyde 3-phosphate + pyruvate + H(+) = 1-deoxy-D-xylulose 5-phosphate + CO2. Its pathway is metabolic intermediate biosynthesis; 1-deoxy-D-xylulose 5-phosphate biosynthesis; 1-deoxy-D-xylulose 5-phosphate from D-glyceraldehyde 3-phosphate and pyruvate: step 1/1. Catalyzes the acyloin condensation reaction between C atoms 2 and 3 of pyruvate and glyceraldehyde 3-phosphate to yield 1-deoxy-D-xylulose-5-phosphate (DXP). The protein is 1-deoxy-D-xylulose-5-phosphate synthase of Rhizobium etli (strain CIAT 652).